A 302-amino-acid chain; its full sequence is Sulfate adenylyltransferase subunit 2 (302 aa).

Belongs to the PAPS reductase family. CysD subfamily. As to quaternary structure, heterodimer composed of CysD, the smaller subunit, and CysN.

The catalysed reaction is sulfate + ATP + H(+) = adenosine 5'-phosphosulfate + diphosphate. Its pathway is sulfur metabolism; hydrogen sulfide biosynthesis; sulfite from sulfate: step 1/3. With CysN forms the ATP sulfurylase (ATPS) that catalyzes the adenylation of sulfate producing adenosine 5'-phosphosulfate (APS) and diphosphate, the first enzymatic step in sulfur assimilation pathway. APS synthesis involves the formation of a high-energy phosphoric-sulfuric acid anhydride bond driven by GTP hydrolysis by CysN coupled to ATP hydrolysis by CysD. The protein is Sulfate adenylyltransferase subunit 2 of Baumannia cicadellinicola subsp. Homalodisca coagulata.